The primary structure comprises 382 residues: MATSSSSSSEEERSLRECELYVQKHNIQQLLKDCIVQLCTVRPDRPMGFLREYFERLEKEETKQLLNQQKSGSRSDSREDEISPPPPMNPVVKGRRRRGAISAEVYTEEDAASYVRKVIPKDYKTMAALAKAIEKNVLFAHLDDNERSDIFDAMFPVTYIAGETVIQQGDEGDNFYVVDQGEMDVYVNNEWATSVGEGGSFGELALIYGTPRAATVKAKTNVKLWGIDRDSYRRILMGSTLRKRKMYEEFLSKVSILESLDKWERLTVADALEPVQFEDGQKIVVQGEPGDEFFIILEGTAAVLQRRSENEEFVEVGRLAPSDYFGEIALLMNRPRAATVVARGLLKCVKLDRPRFERVLGPCSDILKRNIQQYNSFVSLSV.

Position 2 is an N-acetylalanine (A2). The tract at residues 2 to 136 (ATSSSSSSEE…AALAKAIEKN (135 aa)) is dimerization and phosphorylation. Residues 62–96 (TKQLLNQQKSGSRSDSREDEISPPPPMNPVVKGRR) form a disordered region. The Pseudophosphorylation motif motif lies at 97–101 (RRGAI). Residues 138–255 (LFAH…SKVS), E203, R212, 256–382 (ILES…SLSV), E327, and R336 each bind 3',5'-cyclic AMP.

This sequence belongs to the cAMP-dependent kinase regulatory chain family. In terms of assembly, the inactive form of the enzyme is composed of two regulatory chains and two catalytic chains. Activation by cAMP produces two active catalytic monomers and a regulatory dimer that binds four cAMP molecules. Post-translationally, the pseudophosphorylation site binds to the substrate-binding region of the catalytic chain but is not phosphorylated. The physiological significance of phosphorylations by other kinases is unclear.

It is found in the cell membrane. The polypeptide is cAMP-dependent protein kinase type I-alpha regulatory subunit (PRKAR1A) (Gallus gallus (Chicken)).